The following is a 61-amino-acid chain: Cytotoxin 1 (61 aa).

Cystine bridges form between Cys-3–Cys-22, Cys-15–Cys-39, Cys-43–Cys-54, and Cys-55–Cys-60.

Belongs to the three-finger toxin family. Short-chain subfamily. Type IB cytotoxin sub-subfamily. In terms of tissue distribution, expressed by the venom gland.

It is found in the secreted. Functionally, this protein lyses red blood cells and has cardiotoxic and hypotensive activities. The chain is Cytotoxin 1 from Hemachatus haemachatus (Rinkhals).